The sequence spans 236 residues: MSIFVELKSKLDQAITGVNRYNPNNVETLESCIEAMVQENQYDKDILVTTLKLYQLNPDKYNESVVKLILLKTMMMAPKSDYALAKYLIDSSRVGSPELKRIFDIGALLESCNFAVFWRLMRGDYRPLDDVNEPFRQPGEIPKIIKAVPGFEESVRNYACQVINVTFQNIEKSLLVRLLGGVSDKQVNEYARYYGWIPKENGEVYFVQNHEATIKSRNIEEKLQFDILFSLIAENV.

Residues 42–222 (YDKDILVTTL…TIKSRNIEEK (181 aa)) form the PCI domain.

Belongs to the eIF-3 subunit K family. As to quaternary structure, component of the eukaryotic translation initiation factor 3 (eIF-3) complex.

The protein resides in the cytoplasm. In terms of biological role, component of the eukaryotic translation initiation factor 3 (eIF-3) complex, which is involved in protein synthesis of a specialized repertoire of mRNAs and, together with other initiation factors, stimulates binding of mRNA and methionyl-tRNAi to the 40S ribosome. The eIF-3 complex specifically targets and initiates translation of a subset of mRNAs involved in cell proliferation. This is Eukaryotic translation initiation factor 3 subunit K from Brugia malayi (Filarial nematode worm).